The primary structure comprises 324 residues: Spheroidene monooxygenase (324 aa).

A disordered region spans residues 226–324; the sequence is GKDPVGEALT…PGKGGRKENA (99 aa). Low complexity-rich tracts occupy residues 248–278 and 287–313; these read PAAA…VEMP and VVEA…NFKG.

The protein belongs to the CrtA family. The cofactor is heme.

The enzyme catalyses spheroidene + 4 reduced [2Fe-2S]-[ferredoxin] + 2 O2 + 4 H(+) = spheroiden-2-one + 4 oxidized [2Fe-2S]-[ferredoxin] + 3 H2O. It carries out the reaction spheroidene + 2 reduced [2Fe-2S]-[ferredoxin] + O2 + 2 H(+) = 2-hydroxyspheroidene + 2 oxidized [2Fe-2S]-[ferredoxin] + H2O. The catalysed reaction is 2-hydroxyspheroidene + 2 reduced [2Fe-2S]-[ferredoxin] + O2 + 2 H(+) = 2,2-dihydroxyspheroidene + 2 oxidized [2Fe-2S]-[ferredoxin] + H2O. It catalyses the reaction 2,2-dihydroxyspheroidene = spheroiden-2-one + H2O. It functions in the pathway carotenoid biosynthesis; spheroidene biosynthesis. In terms of biological role, involved in the biosynthesis of the carotenoid spheroidene. Catalyzes the introduction of one keto group at the C-2 position of spheroidene. In vitro, can use nonnative substrates and produce oxocarotenoids with a hydroxy and/or a keto group, derived from neurosporene, lycopene, 3,4-didehydrolycopene or 3,4,3',4'-tetradehydrolycopene. This is Spheroidene monooxygenase from Cereibacter sphaeroides (strain ATCC 17023 / DSM 158 / JCM 6121 / CCUG 31486 / LMG 2827 / NBRC 12203 / NCIMB 8253 / ATH 2.4.1.) (Rhodobacter sphaeroides).